The chain runs to 452 residues: GTPase Der (452 aa).

EngA-type G domains are found at residues Pro4–Asp169 and Ile177–Arg352. GTP is bound by residues Gly10–Ser17, Asp57–Leu61, Asn120–Glu123, Gly183–Ser190, Asp230–Ile234, and Asn295–Asp298. In terms of domain architecture, KH-like spans Arg353–Lys438.

Belongs to the TRAFAC class TrmE-Era-EngA-EngB-Septin-like GTPase superfamily. EngA (Der) GTPase family. Associates with the 50S ribosomal subunit.

GTPase that plays an essential role in the late steps of ribosome biogenesis. The chain is GTPase Der from Crocosphaera subtropica (strain ATCC 51142 / BH68) (Cyanothece sp. (strain ATCC 51142)).